Reading from the N-terminus, the 189-residue chain is Peptidyl-tRNA hydrolase (189 aa).

Tyr15 is a binding site for tRNA. His20 serves as the catalytic Proton acceptor. TRNA-binding residues include Tyr67, Asn69, and Asn115.

It belongs to the PTH family. Monomer.

It localises to the cytoplasm. The enzyme catalyses an N-acyl-L-alpha-aminoacyl-tRNA + H2O = an N-acyl-L-amino acid + a tRNA + H(+). Functionally, hydrolyzes ribosome-free peptidyl-tRNAs (with 1 or more amino acids incorporated), which drop off the ribosome during protein synthesis, or as a result of ribosome stalling. Catalyzes the release of premature peptidyl moieties from peptidyl-tRNA molecules trapped in stalled 50S ribosomal subunits, and thus maintains levels of free tRNAs and 50S ribosomes. This Symbiobacterium thermophilum (strain DSM 24528 / JCM 14929 / IAM 14863 / T) protein is Peptidyl-tRNA hydrolase.